The chain runs to 177 residues: MSRVAKAPVVVPAGVDVKINGQVITIKGKNGELTRTLNDAVEVKHADNTLTFGPRDGYADGWAQAGTARALLNSMVIGVTEGFTKKLQLVGVGYRAAVKGNVVNLSLGFSHPVDHQLPAGITAECPTQTEIVLKGADKQVIGQVAADLRAYRRPEPYKGKGVRYADEVVRTKEAKKK.

K44 carries the post-translational modification N6-acetyllysine.

The protein belongs to the universal ribosomal protein uL6 family. As to quaternary structure, part of the 50S ribosomal subunit.

Its function is as follows. This protein binds to the 23S rRNA, and is important in its secondary structure. It is located near the subunit interface in the base of the L7/L12 stalk, and near the tRNA binding site of the peptidyltransferase center. This chain is Large ribosomal subunit protein uL6, found in Escherichia fergusonii (strain ATCC 35469 / DSM 13698 / CCUG 18766 / IAM 14443 / JCM 21226 / LMG 7866 / NBRC 102419 / NCTC 12128 / CDC 0568-73).